Consider the following 320-residue polypeptide: tRNA pseudouridine synthase B (320 aa).

Residue Asp-49 is the Nucleophile of the active site.

Belongs to the pseudouridine synthase TruB family. Type 1 subfamily.

It catalyses the reaction uridine(55) in tRNA = pseudouridine(55) in tRNA. In terms of biological role, responsible for synthesis of pseudouridine from uracil-55 in the psi GC loop of transfer RNAs. This is tRNA pseudouridine synthase B from Bartonella tribocorum (strain CIP 105476 / IBS 506).